The sequence spans 493 residues: Probable cytosol aminopeptidase (493 aa).

Lys-260 and Asp-265 together coordinate Mn(2+). The active site involves Lys-272. 3 residues coordinate Mn(2+): Asp-283, Asp-342, and Glu-344. The active site involves Arg-346.

The protein belongs to the peptidase M17 family. It depends on Mn(2+) as a cofactor.

It localises to the cytoplasm. The catalysed reaction is Release of an N-terminal amino acid, Xaa-|-Yaa-, in which Xaa is preferably Leu, but may be other amino acids including Pro although not Arg or Lys, and Yaa may be Pro. Amino acid amides and methyl esters are also readily hydrolyzed, but rates on arylamides are exceedingly low.. It catalyses the reaction Release of an N-terminal amino acid, preferentially leucine, but not glutamic or aspartic acids.. Its function is as follows. Presumably involved in the processing and regular turnover of intracellular proteins. Catalyzes the removal of unsubstituted N-terminal amino acids from various peptides. The polypeptide is Probable cytosol aminopeptidase (Clostridium perfringens (strain 13 / Type A)).